A 553-amino-acid polypeptide reads, in one-letter code: Methionine--tRNA ligase (553 aa).

The 'HIGH' region motif lies at 12 to 22 (PYANSQLHLGH). Residues Cys-144, Cys-147, Cys-157, and Cys-160 each contribute to the Zn(2+) site. Positions 332–336 (KFSKS) match the 'KMSKS' region motif. Lys-335 is a binding site for ATP.

Belongs to the class-I aminoacyl-tRNA synthetase family. MetG type 1 subfamily. In terms of assembly, monomer. Zn(2+) is required as a cofactor.

The protein localises to the cytoplasm. It catalyses the reaction tRNA(Met) + L-methionine + ATP = L-methionyl-tRNA(Met) + AMP + diphosphate. Its function is as follows. Is required not only for elongation of protein synthesis but also for the initiation of all mRNA translation through initiator tRNA(fMet) aminoacylation. In Dehalococcoides mccartyi (strain ATCC BAA-2266 / KCTC 15142 / 195) (Dehalococcoides ethenogenes (strain 195)), this protein is Methionine--tRNA ligase.